A 426-amino-acid chain; its full sequence is Serine--tRNA ligase (426 aa).

Residue 233–235 participates in L-serine binding; that stretch reads TAE. Residue 264-266 participates in ATP binding; sequence RSE. Residue Glu287 participates in L-serine binding. 351–354 is a binding site for ATP; it reads EISS. L-serine is bound at residue Ser387.

The protein belongs to the class-II aminoacyl-tRNA synthetase family. Type-1 seryl-tRNA synthetase subfamily. Homodimer. The tRNA molecule binds across the dimer.

The protein resides in the cytoplasm. It catalyses the reaction tRNA(Ser) + L-serine + ATP = L-seryl-tRNA(Ser) + AMP + diphosphate + H(+). It carries out the reaction tRNA(Sec) + L-serine + ATP = L-seryl-tRNA(Sec) + AMP + diphosphate + H(+). It functions in the pathway aminoacyl-tRNA biosynthesis; selenocysteinyl-tRNA(Sec) biosynthesis; L-seryl-tRNA(Sec) from L-serine and tRNA(Sec): step 1/1. In terms of biological role, catalyzes the attachment of serine to tRNA(Ser). Is also able to aminoacylate tRNA(Sec) with serine, to form the misacylated tRNA L-seryl-tRNA(Sec), which will be further converted into selenocysteinyl-tRNA(Sec). This Pseudomonas syringae pv. tomato (strain ATCC BAA-871 / DC3000) protein is Serine--tRNA ligase.